We begin with the raw amino-acid sequence, 54 residues long: Pars intercerebralis major peptide D1 (54 aa).

The protein belongs to the granulin family. In terms of processing, six disulfide bonds are present. As to expression, brain.

The protein localises to the secreted. The chain is Pars intercerebralis major peptide D1 from Locusta migratoria (Migratory locust).